The primary structure comprises 2365 residues: TRIO and F-actin-binding protein (2365 aa).

4 disordered regions span residues 48 to 1106 (VPYC…HEPL), 1168 to 1554 (HRDA…SERR), 1593 to 1667 (LPRK…WPKI), and 1679 to 1751 (AGLE…TSWR). Low complexity predominate over residues 132-151 (SDPTSSPDSATPDDTSNSSS). His221 carries the phosphothreonine modification. Polar residues-rich tracts occupy residues 239–271 (TLTQ…QAAS), 291–375 (RASS…TPQR), 403–422 (RTSC…SPNR), 429–471 (RTSC…SPNR), 478–520 (RTSC…SPNR), 527–569 (RTSC…SPNR), 576–618 (RTSC…SPNR), 625–650 (RTSC…SPRT), 661–674 (SSPN…NPRT), 683–701 (RASS…TSCA), 709–722 (SSPN…NPRT), 745–785 (RTSC…SPNR), and 807–837 (IRAT…PKTS). The essentiel for its aggregation stretch occupies residues 324–348 (STQEDTPRASSTQWNTPRASSPSRS). The residue at position 457 (Gln457) is a Phosphothreonine. Over residues 839–854 (TKRDNLRPTCTQRDRT) the composition is skewed to basic and acidic residues. Polar residues-rich tracts occupy residues 855 to 898 (QSFS…SSPH), 913 to 927 (PTQS…PSRS), and 945 to 994 (DRPQ…TSSP). Positions 1045-1056 (RAPESEPPHHEP) are enriched in basic and acidic residues. A compositionally biased stretch (polar residues) spans 1195 to 1206 (SMESLAPSTDSL). 2 stretches are compositionally biased toward basic and acidic residues: residues 1260–1270 (ETRHNLEREEY) and 1303–1319 (GRAE…RKSE). Residues 1332 to 1349 (SQQPSQGQSQLLRRQSSP) are compositionally biased toward low complexity. 2 stretches are compositionally biased toward basic and acidic residues: residues 1378 to 1387 (SPEKRPEGDR) and 1402 to 1411 (TPERELRTQR). A compositionally biased stretch (gly residues) spans 1452 to 1461 (GGLGPGGWWG). Over residues 1494-1508 (WEEKPTHELPRELGK) the composition is skewed to basic and acidic residues. Residues 1524–1534 (ESSQSWHSGTP) show a composition bias toward polar residues. Residues 1594 to 1606 (PRKDPAGHRDDLA) are compositionally biased toward basic and acidic residues. Over residues 1645–1664 (ALQSQSPVQLPSPACTSTQW) the composition is skewed to polar residues. Positions 1696 to 1705 (PSLPELQFQP) are enriched in low complexity. The segment covering 1724 to 1735 (KQADSADKRPAE) has biased composition (basic and acidic residues). The 110-residue stretch at 1778–1887 (LNFKKGWMSI…WIEALRKTVR (110 aa)) folds into the PH domain. Ser1796 is modified (phosphoserine). Disordered stretches follow at residues 1889-2017 (TSAP…LTED) and 2174-2194 (LSKT…HQSD). Position 1930 is an omega-N-methylarginine (Arg1930). Phosphoserine is present on residues Ser1949 and Ser1955. Residues 1965 to 1997 (TPDRLAKQEELERDLAQRSEERRKWFEATDSRT) are compositionally biased toward basic and acidic residues. 2 coiled-coil regions span residues 2062–2247 (SDGH…NQEL) and 2281–2361 (ELEV…SMRN).

As to quaternary structure, isoform 1 forms aggregates. Isoform 1 binds to TRIO and F-actin. Isoform 1 may also interact with myosin II. Interacts with HECTD3. Interacts with PJVK. Interacts with TERF1; mediates TERF1 localization to the centrosome. Ubiquitinated by HECTD3, leading to its degradation by the proteasome. Post-translationally, phosphorylation at Thr-457 by PLK1 ensures mitotic progression and is essential for accurate chromosome segregation. Phosphorylation at residues Thr-221 and Thr-457 by kinase NEK2A and PLK1 coordinates TERF1 translocation from telomere to spindle pole. In terms of tissue distribution, widely expressed. Highly expressed in heart and placenta. As to expression, expressed in fetal brain, retina and cochlea but is not detectable in the other tissues.

The protein localises to the nucleus. The protein resides in the cytoplasm. It is found in the cytoskeleton. It localises to the microtubule organizing center. Its subcellular location is the centrosome. The protein localises to the midbody. The protein resides in the chromosome. It is found in the telomere. Its function is as follows. Regulates actin cytoskeletal organization, cell spreading and cell contraction by directly binding and stabilizing filamentous F-actin and prevents its depolymerization. May also serve as a linker protein to recruit proteins required for F-actin formation and turnover. Essential for correct mitotic progression. In terms of biological role, plays a pivotal role in the formation of stereocilia rootlets. This is TRIO and F-actin-binding protein (TRIOBP) from Homo sapiens (Human).